The following is a 471-amino-acid chain: QKDANFASGRNSIVHLFEWKWNDIADECERFLQPQGFGGVQISPPNEYLVADGRPWWERYQPVSYIINTRSGDESAFTDMTRRCNDAGVRIYVDAVINHMTGMNGVGTSGSSADHDGMNYPAVPYGSGDFHSPCEVNNYQDADNVRNCELVGLRDLNQGSDYVRGVLIDYMNHMIDLGVAGFRVDAAKHMSPGDLSVIFSGLKNLNTDYGFADGARPFIYQEVIDLGGEAISKNEYTGFGCVLEFQFGVSLGNAFQGGNQLKNLANWGPEWGLLEGLDAVVFVDNHDNQRTGGSQILTYKNPKPYKMAIAFMLAHPYGTTRIMSSFDFTDNDQGPPQDGSGNLISPGINDDNTCSNGYVCEHRWRQVYGMVGFRNAVEGTQVENWWSNDDNQIAFSRGSQGFVAFTNGGDLNQNLNTGLPAGTYCDVISGELSGGSCTGKSVTVGDNGSADISLGSAEDDGVLAIHVNAKL.

Q1 carries the pyrrolidone carboxylic acid modification. A disulfide bond links C28 and C84. The Ca(2+) site is built by N98, R146, and D155. A disulfide bridge links C134 with C148. Chloride is bound at residue R183. D185 acts as the Nucleophile in catalysis. H189 lines the Ca(2+) pocket. Catalysis depends on E222, which acts as the Proton donor. Positions 285 and 321 each coordinate chloride. The segment covering 326–343 (FDFTDNDQGPPQDGSGNL) has biased composition (polar residues). The disordered stretch occupies residues 326–346 (FDFTDNDQGPPQDGSGNLISP). 2 cysteine pairs are disulfide-bonded: C354–C360 and C425–C437.

The protein belongs to the glycosyl hydrolase 13 family. Monomer. Ca(2+) is required as a cofactor. The cofactor is chloride.

The enzyme catalyses Endohydrolysis of (1-&gt;4)-alpha-D-glucosidic linkages in polysaccharides containing three or more (1-&gt;4)-alpha-linked D-glucose units.. This is Alpha-amylase from Tenebrio molitor (Yellow mealworm beetle).